The chain runs to 61 residues: Conotoxin Vn5.3 (61 aa).

The N-terminal stretch at 1-19 (MRCLPVFVILLLLIASAPG) is a signal peptide. The propeptide occupies 20 to 50 (VDVQPKTKYYVPRASRRDFAKKTPKRLSKLR).

This sequence belongs to the conotoxin T superfamily. Contains 2 disulfide bonds that can be either 'C1-C3, C2-C4' or 'C1-C4, C2-C3', since these disulfide connectivities have been observed for conotoxins with cysteine framework V (for examples, see AC P0DQQ7 and AC P81755). As to expression, expressed by the venom duct.

It localises to the secreted. The polypeptide is Conotoxin Vn5.3 (Conus ventricosus (Mediterranean cone)).